Consider the following 570-residue polypeptide: Hydroxylamine reductase (570 aa).

The [4Fe-4S] cluster site is built by Cys-5, Cys-8, Cys-17, and Cys-23. 8 residues coordinate hybrid [4Fe-2O-2S] cluster: His-266, Glu-290, Cys-334, Cys-425, Cys-453, Cys-478, Glu-513, and Lys-515. The residue at position 425 (Cys-425) is a Cysteine persulfide.

It belongs to the HCP family. The cofactor is [4Fe-4S] cluster. Hybrid [4Fe-2O-2S] cluster serves as cofactor.

Its subcellular location is the cytoplasm. It carries out the reaction A + NH4(+) + H2O = hydroxylamine + AH2 + H(+). Functionally, catalyzes the reduction of hydroxylamine to form NH(3) and H(2)O. This Clostridium botulinum (strain Kyoto / Type A2) protein is Hydroxylamine reductase.